Reading from the N-terminus, the 486-residue chain is Flavin-dependent monooxygenase pboD (486 aa).

FAD-binding residues include D51, G65, and R124. Residue R203 is part of the active site. FAD is bound by residues D344 and G357.

Belongs to the paxM FAD-dependent monooxygenase family. FAD is required as a cofactor.

The protein operates within secondary metabolite biosynthesis. Its function is as follows. Flavin-dependent monooxygenase; part of the gene cluster that mediates the biosynthesis of protubonine B, a hydroxylated and diacetylated cyclo-L-Trp-L-Leu derivative. Within the pathway, pboD catalyzes the hydroxylation at C-3 of the indole ring of cyclo-L-Trp-L-Leu and subsequent formation of the pyrrolidine ring, eading to the production of protubonine D. PboD is also able to accept other cyclodipeptides (CDPs) as substrates, including cyclo-L-Trp-L-Trp, cyclo-L-Trp-L-Tyr, cyclo-L-Trp-L-Phe, cyclo-L-Trp-L-Met, cyclo-L-Trp-L-Ala, cyclo-L-Trp-L-Pro and cyclo-L-Trp-Gly. Assays with cyclo-L-Trp-L-Trp, cyclo-L-Trp-L-Tyr, cyclo-L-Trp-L-Phe show similar or even slightly higher conversion yields, compared with that of the natural substrate cyclo-L-Trp-L-Leu, whereas cyclo-L-Trp-L-Pro and cyclo-L-Trp-Gly are accepted by PboD but only with conversion yields of 10 and 4%, respectively. Cyclo-L-Trp-L-His is not accepted as a substrate. The first step of the protubonine B synthesis is performed by the nonribosomal peptide synthetase pboA that catalyzes the formation of cyclo-L-Trp-L-Leu by condensing L-Leu with L-Trp. The flavin-dependent monooxygenase pboD is responsible for hydroxylation at C-3 of the indole ring and subsequent formation of the pyrrolidine ring, leadind to protubonine D. Protubonine D is further diacetylated by two acetyltransferases, pboB and pboC, to form the final product protubonine B via protubonine C. This is Flavin-dependent monooxygenase pboD from Aspergillus ustus.